Consider the following 197-residue polypeptide: Non-structural protein 5 (197 aa).

Residues 17 to 30 (IFKNESSSTTSTLS) are compositionally biased toward low complexity. Residues 17–36 (IFKNESSSTTSTLSGKSIGR) are disordered. Asp-92 provides a ligand contact to Mg(2+).

The protein belongs to the rotavirus NSP5 family. As to quaternary structure, homodimer. Interacts with VP1. Interacts with VP2. Interacts with NSP2; this interaction leads to up-regulation of NSP5 hyperphosphorylation and formation of virus factories. Interacts with NSP6. Participates in the selective exclusion of host proteins from stress granules (SG) and P bodies (PB). Also participates in the sequestration of these remodeled organelles in viral factories. The cofactor is Mg(2+). O-glycosylated.

It is found in the host cytoplasm. In terms of biological role, plays an essential role in the viral genome replication. Participates, together with NSP2, in the formation of viral factories (viroplasms), which are large inclusions in the host cytoplasm where replication intermediates are assembled and viral RNA replication takes place. Orchestrates the recruitment of viroplasmic proteins such as capsid proteins to these factories. Participates in the selective exclusion of host proteins from stress granules (SG) and P bodies (PB). Also participates in the sequestration of these remodeled organelles in viral factories. In Homo sapiens (Human), this protein is Non-structural protein 5.